The sequence spans 391 residues: Phosphoglycerate kinase (391 aa).

Substrate is bound by residues 21–23, Arg41, 64–67, Arg121, and Arg154; these read DFN and HLGR. Residues Lys205, Glu322, and 348–351 each bind ATP; that span reads GGDS.

This sequence belongs to the phosphoglycerate kinase family. Monomer.

The protein resides in the cytoplasm. The enzyme catalyses (2R)-3-phosphoglycerate + ATP = (2R)-3-phospho-glyceroyl phosphate + ADP. It functions in the pathway carbohydrate degradation; glycolysis; pyruvate from D-glyceraldehyde 3-phosphate: step 2/5. The protein is Phosphoglycerate kinase of Solibacter usitatus (strain Ellin6076).